The sequence spans 249 residues: MDTDGDNDVFGSGNDTRNNDDKKKEEMKQNISDNSQIISTRDHEADIIGSISKEDLSKIVVRVDRHDALSANDVQSFREAMINFMRDKDPNRNQPSDKLIIAMEVGVYQMVINLGTSAKLGNANNLEFTIAYDQETRTYKVADFVNYMQSRMRNSPNVVRQYARAMEKTINNIRSAGIINSNGVLAAKHGVLASYRNSYSDFAVGFGNDTTDAQLTSLMLARKQALCKGEGGSVEHYNTMQLANLKHPC.

The interval 1–33 (MDTDGDNDVFGSGNDTRNNDDKKKEEMKQNISD) is disordered. A compositionally biased stretch (basic and acidic residues) spans 17-28 (RNNDDKKKEEMK).

This sequence belongs to the closteroviridae capsid protein family.

The protein localises to the virion. In terms of biological role, capsid protein self-assembles to form filamentous capsids, about 650-850 nm in length. This is Capsid protein from Beta vulgaris (Sugar beet).